A 112-amino-acid polypeptide reads, in one-letter code: Small ribosomal subunit protein bS6 (112 aa).

The protein belongs to the bacterial ribosomal protein bS6 family.

Functionally, binds together with bS18 to 16S ribosomal RNA. The sequence is that of Small ribosomal subunit protein bS6 from Hyphomonas neptunium (strain ATCC 15444).